The chain runs to 217 residues: Non-structural protein NS3 (217 aa).

It belongs to the orbivirus NS3 family.

Functionally, may play a role in the release of virions from infected cells. The protein is Non-structural protein NS3 (Segment-10) of African horse sickness virus 9 (AHSV-9).